A 260-amino-acid chain; its full sequence is Adenosylcobinamide-GDP ribazoletransferase (260 aa).

The next 7 helical transmembrane spans lie at 31-51 (IIFF…LVNI), 55-75 (IFSS…VRGI), 111-131 (VIGV…FAFV), 140-160 (FLIF…LMYY), 177-197 (ISSW…VYFT), 202-222 (FIFL…LKKF), and 234-254 (HLGA…LLGE).

It belongs to the CobS family. Mg(2+) serves as cofactor.

It localises to the cell inner membrane. The enzyme catalyses alpha-ribazole + adenosylcob(III)inamide-GDP = adenosylcob(III)alamin + GMP + H(+). The catalysed reaction is alpha-ribazole 5'-phosphate + adenosylcob(III)inamide-GDP = adenosylcob(III)alamin 5'-phosphate + GMP + H(+). Its pathway is cofactor biosynthesis; adenosylcobalamin biosynthesis; adenosylcobalamin from cob(II)yrinate a,c-diamide: step 7/7. Functionally, joins adenosylcobinamide-GDP and alpha-ribazole to generate adenosylcobalamin (Ado-cobalamin). Also synthesizes adenosylcobalamin 5'-phosphate from adenosylcobinamide-GDP and alpha-ribazole 5'-phosphate. The sequence is that of Adenosylcobinamide-GDP ribazoletransferase from Thermodesulfovibrio yellowstonii (strain ATCC 51303 / DSM 11347 / YP87).